The following is a 492-amino-acid chain: Probable cobyric acid synthase (492 aa).

Positions 248 to 434 (PVRIAVVRLP…MHGLFQNPGA (187 aa)) constitute a GATase cobBQ-type domain. Residue Cys327 is the Nucleophile of the active site. His426 is a catalytic residue.

Belongs to the CobB/CobQ family. CobQ subfamily.

Its pathway is cofactor biosynthesis; adenosylcobalamin biosynthesis. Functionally, catalyzes amidations at positions B, D, E, and G on adenosylcobyrinic A,C-diamide. NH(2) groups are provided by glutamine, and one molecule of ATP is hydrogenolyzed for each amidation. This Methanoculleus marisnigri (strain ATCC 35101 / DSM 1498 / JR1) protein is Probable cobyric acid synthase.